A 693-amino-acid chain; its full sequence is Polyribonucleotide nucleotidyltransferase (693 aa).

Mg(2+) contacts are provided by D490 and D496. A KH domain is found at 557–617 (PRISWFFIDP…EKVQEAVEYI (61 aa)). The S1 motif domain occupies 627-691 (GDLYTGKVTR…DAGRLQFRRL (65 aa)).

This sequence belongs to the polyribonucleotide nucleotidyltransferase family. The cofactor is Mg(2+).

It localises to the cytoplasm. It carries out the reaction RNA(n+1) + phosphate = RNA(n) + a ribonucleoside 5'-diphosphate. In terms of biological role, involved in mRNA degradation. Catalyzes the phosphorolysis of single-stranded polyribonucleotides processively in the 3'- to 5'-direction. In Fervidobacterium nodosum (strain ATCC 35602 / DSM 5306 / Rt17-B1), this protein is Polyribonucleotide nucleotidyltransferase.